A 208-amino-acid polypeptide reads, in one-letter code: Uracil phosphoribosyltransferase (208 aa).

5-phospho-alpha-D-ribose 1-diphosphate-binding positions include Arg-78, Arg-103, and 130–138 (DPMLATANS). Residues Ile-193 and 198–200 (GDA) contribute to the uracil site. 5-phospho-alpha-D-ribose 1-diphosphate is bound at residue Asp-199.

It belongs to the UPRTase family. Requires Mg(2+) as cofactor.

It carries out the reaction UMP + diphosphate = 5-phospho-alpha-D-ribose 1-diphosphate + uracil. It functions in the pathway pyrimidine metabolism; UMP biosynthesis via salvage pathway; UMP from uracil: step 1/1. Allosterically activated by GTP. Its function is as follows. Catalyzes the conversion of uracil and 5-phospho-alpha-D-ribose 1-diphosphate (PRPP) to UMP and diphosphate. The polypeptide is Uracil phosphoribosyltransferase (Brucella melitensis biotype 2 (strain ATCC 23457)).